We begin with the raw amino-acid sequence, 228 residues long: Aquaporin Z (228 aa).

2 helical membrane-spanning segments follow: residues 1-21 (MLNK…GGCG) and 23-43 (AILA…ALAF). The NPA 1 signature appears at 63-65 (NPA). 3 consecutive transmembrane segments (helical) span residues 82–102 (IPYW…LYVI), 129–149 (MMAG…IILG), and 154–174 (LAPA…IHLV). Positions 184 to 186 (NPA) match the NPA 2 motif. Residues 205–225 (LFWVAPLVGAVIGAIIWKGLL) form a helical membrane-spanning segment.

Belongs to the MIP/aquaporin (TC 1.A.8) family. As to quaternary structure, homotetramer.

Its subcellular location is the cell inner membrane. It carries out the reaction H2O(in) = H2O(out). Functionally, channel that permits osmotically driven movement of water in both directions. It is involved in the osmoregulation and in the maintenance of cell turgor during volume expansion in rapidly growing cells. It mediates rapid entry or exit of water in response to abrupt changes in osmolarity. The polypeptide is Aquaporin Z (Brucella melitensis biotype 1 (strain ATCC 23456 / CCUG 17765 / NCTC 10094 / 16M)).